The chain runs to 238 residues: 7-cyano-7-deazaguanine synthase (238 aa).

Residue 14 to 24 coordinates ATP; sequence FSGGQDSATCL. Residues Cys-202, Cys-217, Cys-220, and Cys-223 each contribute to the Zn(2+) site.

This sequence belongs to the QueC family. Zn(2+) is required as a cofactor.

The enzyme catalyses 7-carboxy-7-deazaguanine + NH4(+) + ATP = 7-cyano-7-deazaguanine + ADP + phosphate + H2O + H(+). The protein operates within purine metabolism; 7-cyano-7-deazaguanine biosynthesis. Functionally, catalyzes the ATP-dependent conversion of 7-carboxy-7-deazaguanine (CDG) to 7-cyano-7-deazaguanine (preQ(0)). This chain is 7-cyano-7-deazaguanine synthase, found in Nitrobacter winogradskyi (strain ATCC 25391 / DSM 10237 / CIP 104748 / NCIMB 11846 / Nb-255).